The chain runs to 993 residues: Glycogen phosphorylase 2 (993 aa).

The segment at 1-82 (MEEKRSTNSP…SNQSEDPATQ (82 aa)) is disordered. Over residues 19 to 48 (RSGSITSATSHPPRSNSNPKLVAKHQQQLY) the composition is skewed to polar residues. Positions 58–77 (EQQNQQPQQQQQKQTSNQSE) are enriched in low complexity. Lys-763 is modified (N6-(pyridoxal phosphate)lysine). The segment covering 962–981 (VISGGDKTNNTLKPKQTTKG) has biased composition (polar residues). The interval 962 to 993 (VISGGDKTNNTLKPKQTTKGFNIGGQPGNPTN) is disordered. Gly residues predominate over residues 983–993 (NIGGQPGNPTN).

This sequence belongs to the glycogen phosphorylase family. As to quaternary structure, homodimer. The cofactor is pyridoxal 5'-phosphate. In terms of processing, the N-terminus is blocked. Enzyme activity requires processing of the 113 kDa peptide to an enzymatically active 106 kDa form of the protein. Processing would occur near the middle of the Gln-rich repetitive element.

It carries out the reaction [(1-&gt;4)-alpha-D-glucosyl](n) + phosphate = [(1-&gt;4)-alpha-D-glucosyl](n-1) + alpha-D-glucose 1-phosphate. Its function is as follows. Phosphorylase is an important allosteric enzyme in carbohydrate metabolism. Enzymes from different sources differ in their regulatory mechanisms and in their natural substrates. However, all known phosphorylases share catalytic and structural properties. The chain is Glycogen phosphorylase 2 (glpD) from Dictyostelium discoideum (Social amoeba).